A 483-amino-acid chain; its full sequence is Leukocyte immunoglobulin-like receptor subfamily A member 2 (483 aa).

An N-terminal signal peptide occupies residues 1-23 (MTPILTVLICLGLSLGPRTHVQA). The Extracellular segment spans residues 24-449 (GHLPKPTLWA…QHPQDYTVEN (426 aa)). 4 Ig-like C2-type domains span residues 27 to 113 (PKPT…DPLE), 117 to 222 (TGAY…GVSK), 224 to 313 (PSLS…DPLD), and 324 to 413 (PSLS…SDPL). C49 and C97 are disulfide-bonded. Residues N64, N103, and N138 are each glycosylated (N-linked (GlcNAc...) asparagine). Cystine bridges form between C143-C195 and C244-C295. N279, N300, and N339 each carry an N-linked (GlcNAc...) asparagine glycan. C344 and C395 are joined by a disulfide. Position 404 is a 3'-nitrotyrosine (Y404). N-linked (GlcNAc...) asparagine glycosylation occurs at N429. The chain crosses the membrane as a helical span at residues 450-470 (LIRMGVAGLVLVVLGILLFEA). Residues 471–483 (QHSQRSLQDAAGR) lie on the Cytoplasmic side of the membrane.

As to quaternary structure, homodimer. As to expression, detected on the surface of all peripheral blood monocytes, neutrophils, basophils and eosinophils (at protein level). Expression levels are very low or not detectable on monocytes, T-cells, B-cells, dendritic cells and natural killer (NK) cells.

It is found in the cell membrane. It localises to the secreted. Part of the innate immune responses against microbial infection. Specifically recognizes a set of N-terminally truncated immunoglobulins that are produced via cleavage by proteases from a range of pathogenic bacteria and fungi, including L.pneumophila, M.hyorhinis, S.pneumoniae, S.aureus and C.albicans. Recognizes epitopes that are in part in the variable region of the immunoglobulin light chains, but requires also the constant region for signaling. Binds to a subset of cleaved IgM, IgG3 and IgG4 molecules, but does not bind cleaved IgA1. Binding of N-terminally truncated immunoglobulins mediates activation of neutrophils. In monocytes, activation leads to the release of CSF2, CF3, IL6, CXCL8 and CCL3 and down-regulates responses to bacterial lipopolysaccharide (LPS), possibly via down-regulation of TLR4 expression and reduced signaling via TLR4. In eosinophils, activation by ligand binding leads to the release of RNASE2, IL4 and leukotriene C4. Does not bind class I MHC antigens. The chain is Leukocyte immunoglobulin-like receptor subfamily A member 2 (LILRA2) from Homo sapiens (Human).